The primary structure comprises 535 residues: Phosphoenolpyruvate carboxykinase (ATP) (535 aa).

Substrate contacts are provided by Arg59, Tyr201, and Lys207. Residues Lys207, His226, and 243 to 251 (GLSGTGKTT) each bind ATP. The Mn(2+) site is built by Lys207 and His226. Asp264 serves as a coordination point for Mn(2+). ATP-binding positions include Glu292, Arg328, 444-445 (RI), and Thr450. Arg328 lines the substrate pocket.

This sequence belongs to the phosphoenolpyruvate carboxykinase (ATP) family. Mn(2+) is required as a cofactor.

Its subcellular location is the cytoplasm. It catalyses the reaction oxaloacetate + ATP = phosphoenolpyruvate + ADP + CO2. The protein operates within carbohydrate biosynthesis; gluconeogenesis. In terms of biological role, involved in the gluconeogenesis. Catalyzes the conversion of oxaloacetate (OAA) to phosphoenolpyruvate (PEP) through direct phosphoryl transfer between the nucleoside triphosphate and OAA. In Parabacteroides distasonis (strain ATCC 8503 / DSM 20701 / CIP 104284 / JCM 5825 / NCTC 11152), this protein is Phosphoenolpyruvate carboxykinase (ATP).